Here is a 568-residue protein sequence, read N- to C-terminus: Proline--tRNA ligase (568 aa).

This sequence belongs to the class-II aminoacyl-tRNA synthetase family. ProS type 1 subfamily. As to quaternary structure, homodimer.

The protein resides in the cytoplasm. It carries out the reaction tRNA(Pro) + L-proline + ATP = L-prolyl-tRNA(Pro) + AMP + diphosphate. In terms of biological role, catalyzes the attachment of proline to tRNA(Pro) in a two-step reaction: proline is first activated by ATP to form Pro-AMP and then transferred to the acceptor end of tRNA(Pro). As ProRS can inadvertently accommodate and process non-cognate amino acids such as alanine and cysteine, to avoid such errors it has two additional distinct editing activities against alanine. One activity is designated as 'pretransfer' editing and involves the tRNA(Pro)-independent hydrolysis of activated Ala-AMP. The other activity is designated 'posttransfer' editing and involves deacylation of mischarged Ala-tRNA(Pro). The misacylated Cys-tRNA(Pro) is not edited by ProRS. The sequence is that of Proline--tRNA ligase from Nitrosomonas eutropha (strain DSM 101675 / C91 / Nm57).